We begin with the raw amino-acid sequence, 212 residues long: Pyridoxine/pyridoxamine 5'-phosphate oxidase (212 aa).

Residues Arg7–Tyr10 and Lys66 each bind substrate. Residues Arg61 to Lys66, Tyr76 to Thr77, Arg82, Lys83, and Gln105 each bind FMN. Substrate-binding residues include Tyr123, Arg127, and Ser131. Residues Gln140 to Ser141 and Trp185 contribute to the FMN site. A substrate-binding site is contributed by Arg191–His193. Residue Arg195 coordinates FMN.

Belongs to the pyridoxamine 5'-phosphate oxidase family. Homodimer. The cofactor is FMN.

The enzyme catalyses pyridoxamine 5'-phosphate + O2 + H2O = pyridoxal 5'-phosphate + H2O2 + NH4(+). The catalysed reaction is pyridoxine 5'-phosphate + O2 = pyridoxal 5'-phosphate + H2O2. It participates in cofactor metabolism; pyridoxal 5'-phosphate salvage; pyridoxal 5'-phosphate from pyridoxamine 5'-phosphate: step 1/1. It functions in the pathway cofactor metabolism; pyridoxal 5'-phosphate salvage; pyridoxal 5'-phosphate from pyridoxine 5'-phosphate: step 1/1. In terms of biological role, catalyzes the oxidation of either pyridoxine 5'-phosphate (PNP) or pyridoxamine 5'-phosphate (PMP) into pyridoxal 5'-phosphate (PLP). In Hahella chejuensis (strain KCTC 2396), this protein is Pyridoxine/pyridoxamine 5'-phosphate oxidase.